Consider the following 557-residue polypeptide: Formate--tetrahydrofolate ligase (557 aa).

65–72 (SPAGEGKT) serves as a coordination point for ATP.

Belongs to the formate--tetrahydrofolate ligase family.

The catalysed reaction is (6S)-5,6,7,8-tetrahydrofolate + formate + ATP = (6R)-10-formyltetrahydrofolate + ADP + phosphate. Its pathway is one-carbon metabolism; tetrahydrofolate interconversion. This is Formate--tetrahydrofolate ligase from Methylobacillus flagellatus (strain ATCC 51484 / DSM 6875 / VKM B-1610 / KT).